A 276-amino-acid polypeptide reads, in one-letter code: Putative ankyrin repeat protein R838 (276 aa).

ANK repeat units lie at residues 134 to 163 (DGDN…DPRS), 164 to 193 (DYDY…DISS), 195 to 223 (NHWP…DVRA), and 225 to 253 (NYNP…EIGS). The tract at residues 254 to 276 (VSDDDTYDSDSSDYSEDDSESIN) is disordered. A compositionally biased stretch (acidic residues) spans 255 to 276 (SDDDTYDSDSSDYSEDDSESIN).

This Acanthamoeba polyphaga (Amoeba) protein is Putative ankyrin repeat protein R838.